The chain runs to 245 residues: Ribosomal RNA large subunit methyltransferase E (245 aa).

S-adenosyl-L-methionine-binding residues include G58, W60, D78, D96, and D123. The Proton acceptor role is filled by K163.

The protein belongs to the class I-like SAM-binding methyltransferase superfamily. RNA methyltransferase RlmE family.

The protein resides in the cytoplasm. It catalyses the reaction uridine(2552) in 23S rRNA + S-adenosyl-L-methionine = 2'-O-methyluridine(2552) in 23S rRNA + S-adenosyl-L-homocysteine + H(+). Specifically methylates the uridine in position 2552 of 23S rRNA at the 2'-O position of the ribose in the fully assembled 50S ribosomal subunit. The sequence is that of Ribosomal RNA large subunit methyltransferase E from Methanocaldococcus jannaschii (strain ATCC 43067 / DSM 2661 / JAL-1 / JCM 10045 / NBRC 100440) (Methanococcus jannaschii).